Consider the following 241-residue polypeptide: Zinc finger CCHC domain-containing protein 24 (241 aa).

2 positions are modified to phosphoserine: serine 65 and serine 93. A CCHC-type zinc finger spans residues 132-149; the sequence is YLCHLCFNKGHYIKDCPQ.

The protein is Zinc finger CCHC domain-containing protein 24 of Mus musculus (Mouse).